The following is a 212-amino-acid chain: Uridine kinase (212 aa).

13-20 is a binding site for ATP; that stretch reads GASASGKS.

The protein belongs to the uridine kinase family.

Its subcellular location is the cytoplasm. It carries out the reaction uridine + ATP = UMP + ADP + H(+). The catalysed reaction is cytidine + ATP = CMP + ADP + H(+). It functions in the pathway pyrimidine metabolism; CTP biosynthesis via salvage pathway; CTP from cytidine: step 1/3. It participates in pyrimidine metabolism; UMP biosynthesis via salvage pathway; UMP from uridine: step 1/1. In Shewanella baltica (strain OS223), this protein is Uridine kinase.